Here is a 518-residue protein sequence, read N- to C-terminus: Light-independent protochlorophyllide reductase subunit B (518 aa).

Aspartate 36 contacts [4Fe-4S] cluster. Aspartate 299 functions as the Proton donor in the catalytic mechanism. Substrate is bound at residue 434 to 435 (GM).

This sequence belongs to the ChlB/BchB/BchZ family. Protochlorophyllide reductase is composed of three subunits; ChlL, ChlN and ChlB. Forms a heterotetramer of two ChlB and two ChlN subunits. The cofactor is [4Fe-4S] cluster.

The protein localises to the plastid. The protein resides in the chloroplast. It catalyses the reaction chlorophyllide a + oxidized 2[4Fe-4S]-[ferredoxin] + 2 ADP + 2 phosphate = protochlorophyllide a + reduced 2[4Fe-4S]-[ferredoxin] + 2 ATP + 2 H2O. Its pathway is porphyrin-containing compound metabolism; chlorophyll biosynthesis (light-independent). Its function is as follows. Component of the dark-operative protochlorophyllide reductase (DPOR) that uses Mg-ATP and reduced ferredoxin to reduce ring D of protochlorophyllide (Pchlide) to form chlorophyllide a (Chlide). This reaction is light-independent. The NB-protein (ChlN-ChlB) is the catalytic component of the complex. This Adiantum capillus-veneris (Maidenhair fern) protein is Light-independent protochlorophyllide reductase subunit B.